The primary structure comprises 79 residues: uncharacterized protein (79 aa).

The TM2 domain maps to 3–54 (SKKNKIVAALLAFFFGGLGIHKFYLGRVGQGILYILFCWTGIPSIIAFIEFI). 2 helical membrane passes run 8 to 28 (IVAA…FYLG) and 37 to 57 (ILFC…IIFL).

It is found in the cell membrane. This is an uncharacterized protein from Bacillus subtilis (strain 168).